A 500-amino-acid polypeptide reads, in one-letter code: Glycerol kinase (500 aa).

Residue Thr13 participates in ADP binding. ATP contacts are provided by Thr13, Thr14, and Ser15. Position 13 (Thr13) interacts with sn-glycerol 3-phosphate. Arg17 serves as a coordination point for ADP. 4 residues coordinate sn-glycerol 3-phosphate: Arg83, Glu84, Tyr135, and Asp244. Residues Arg83, Glu84, Tyr135, Asp244, and Gln245 each coordinate glycerol. ADP-binding residues include Thr266 and Gly309. Thr266, Gly309, Gln313, and Gly410 together coordinate ATP. ADP-binding residues include Gly410 and Asn414.

It belongs to the FGGY kinase family.

It carries out the reaction glycerol + ATP = sn-glycerol 3-phosphate + ADP + H(+). The protein operates within polyol metabolism; glycerol degradation via glycerol kinase pathway; sn-glycerol 3-phosphate from glycerol: step 1/1. With respect to regulation, inhibited by fructose 1,6-bisphosphate (FBP). Its function is as follows. Key enzyme in the regulation of glycerol uptake and metabolism. Catalyzes the phosphorylation of glycerol to yield sn-glycerol 3-phosphate. The chain is Glycerol kinase from Burkholderia multivorans (strain ATCC 17616 / 249).